Reading from the N-terminus, the 254-residue chain is Allene oxide cyclase 1, chloroplastic (254 aa).

A chloroplast-targeting transit peptide spans methionine 1 to arginine 78. A compositionally biased stretch (low complexity) spans serine 44–threonine 56. The interval serine 44–proline 79 is disordered. A compositionally biased stretch (polar residues) spans arginine 65–proline 77.

The protein belongs to the allene oxide cyclase family. As to expression, highly expressed in fully developed leaves.

It localises to the plastid. Its subcellular location is the chloroplast. The enzyme catalyses (9Z,13S,15Z)-12,13-epoxyoctadeca-9,11,15-trienoate = (9S,13S,15Z)-12-oxophyto-10,15-dienoate. Its function is as follows. Involved in the production of 12-oxo-phytodienoic acid (OPDA), a precursor of jasmonic acid. In Arabidopsis thaliana (Mouse-ear cress), this protein is Allene oxide cyclase 1, chloroplastic (AOC1).